Reading from the N-terminus, the 139-residue chain is 3-hydroxyacyl-[acyl-carrier-protein] dehydratase FabZ (139 aa).

The active site involves His-47.

It belongs to the thioester dehydratase family. FabZ subfamily.

It is found in the cytoplasm. It carries out the reaction a (3R)-hydroxyacyl-[ACP] = a (2E)-enoyl-[ACP] + H2O. In terms of biological role, involved in unsaturated fatty acids biosynthesis. Catalyzes the dehydration of short chain beta-hydroxyacyl-ACPs and long chain saturated and unsaturated beta-hydroxyacyl-ACPs. The sequence is that of 3-hydroxyacyl-[acyl-carrier-protein] dehydratase FabZ from Oenococcus oeni (strain ATCC BAA-331 / PSU-1).